A 459-amino-acid chain; its full sequence is ADP-specific phosphofructokinase (459 aa).

Positions 1–457 constitute an ADPK domain; that stretch reads MMEFLKDFQK…FASYLSLLKR (457 aa). Mg(2+)-binding residues include glutamate 268, glutamate 298, and aspartate 441. Aspartate 441 serves as the catalytic Proton acceptor.

It belongs to the carbohydrate kinase PfkC family. The cofactor is Mg(2+).

Its subcellular location is the cytoplasm. It catalyses the reaction beta-D-fructose 6-phosphate + ADP = beta-D-fructose 1,6-bisphosphate + AMP + H(+). It functions in the pathway carbohydrate degradation; glycolysis. Functionally, catalyzes the phosphorylation of fructose 6-phosphate to fructose 1,6-bisphosphate using ADP as the phosphate donor. This Thermococcus litoralis protein is ADP-specific phosphofructokinase.